We begin with the raw amino-acid sequence, 548 residues long: Inosine-5'-monophosphate dehydrogenase (548 aa).

CBS domains are found at residues 121–201 and 205–261; these read FILD…EDPV and MSTE…PLAS. Residues 298 to 300 and 348 to 350 contribute to the NAD(+) site; these read DSS and GMG. Residues G350 and G352 each contribute to the K(+) site. Position 353 (S353) interacts with IMP. C355 provides a ligand contact to K(+). C355 acts as the Thioimidate intermediate in catalysis. Residues 388 to 390 and 411 to 412 each bind IMP; these read DGG and GS. The active-site Proton acceptor is the R461. Residue Q473 participates in IMP binding. The segment at 527–548 is disordered; sequence ASAQTEGNVHGLHSHEKKLYSS. S528 contributes to the K(+) binding site. Over residues 539–548 the composition is skewed to basic and acidic residues; the sequence is HSHEKKLYSS.

Belongs to the IMPDH/GMPR family. As to quaternary structure, homotetramer. K(+) serves as cofactor.

The protein localises to the cytoplasm. The enzyme catalyses IMP + NAD(+) + H2O = XMP + NADH + H(+). The protein operates within purine metabolism; XMP biosynthesis via de novo pathway; XMP from IMP: step 1/1. Mycophenolic acid (MPA) is a non-competitive inhibitor that prevents formation of the closed enzyme conformation by binding to the same site as the amobile flap. In contrast, mizoribine monophosphate (MZP) is a competitive inhibitor that induces the closed conformation. MPA is a potent inhibitor of mammalian IMPDHs but a poor inhibitor of the bacterial enzymes. MZP is a more potent inhibitor of bacterial IMPDH. Its function is as follows. Catalyzes the conversion of inosine 5'-phosphate (IMP) to xanthosine 5'-phosphate (XMP), the first committed and rate-limiting step in the de novo synthesis of guanine nucleotides, and therefore plays an important role in the regulation of cell growth. Part of the gene cluster that mediates the biosynthesis of mycophenolic acid (MPA), the first isolated antibiotic natural product in the world. Does not play a role in the biosynthesis of MPA, but is involved in self resistance to MPA, since MPA acts as an inhibitor of IMP dehydrogenases. This Penicillium brevicompactum protein is Inosine-5'-monophosphate dehydrogenase.